The primary structure comprises 430 residues: Adenylosuccinate synthetase (430 aa).

Residues 12–18 and 40–42 contribute to the GTP site; these read GDEGKGK and GHT. Asp-13 serves as the catalytic Proton acceptor. Mg(2+) contacts are provided by Asp-13 and Gly-40. Residues 13 to 16, 38 to 41, Thr-128, Arg-142, Gln-223, Thr-238, and Arg-302 each bind IMP; these read DEGK and NAGH. His-41 (proton donor) is an active-site residue. A substrate-binding site is contributed by 298–304; sequence VNTGRKR. GTP-binding positions include Arg-304, 330–332, and 412–414; these read KLD and GVG.

Belongs to the adenylosuccinate synthetase family. As to quaternary structure, homodimer. Mg(2+) is required as a cofactor.

It localises to the cytoplasm. It carries out the reaction IMP + L-aspartate + GTP = N(6)-(1,2-dicarboxyethyl)-AMP + GDP + phosphate + 2 H(+). It participates in purine metabolism; AMP biosynthesis via de novo pathway; AMP from IMP: step 1/2. Plays an important role in the de novo pathway of purine nucleotide biosynthesis. Catalyzes the first committed step in the biosynthesis of AMP from IMP. This is Adenylosuccinate synthetase from Corynebacterium aurimucosum (strain ATCC 700975 / DSM 44827 / CIP 107346 / CN-1) (Corynebacterium nigricans).